The primary structure comprises 348 residues: Nicotinate-nucleotide--dimethylbenzimidazole phosphoribosyltransferase (348 aa).

Catalysis depends on Glu-316, which acts as the Proton acceptor.

The protein belongs to the CobT family.

The catalysed reaction is 5,6-dimethylbenzimidazole + nicotinate beta-D-ribonucleotide = alpha-ribazole 5'-phosphate + nicotinate + H(+). It functions in the pathway nucleoside biosynthesis; alpha-ribazole biosynthesis; alpha-ribazole from 5,6-dimethylbenzimidazole: step 1/2. In terms of biological role, catalyzes the synthesis of alpha-ribazole-5'-phosphate from nicotinate mononucleotide (NAMN) and 5,6-dimethylbenzimidazole (DMB). In Xanthomonas campestris pv. campestris (strain B100), this protein is Nicotinate-nucleotide--dimethylbenzimidazole phosphoribosyltransferase.